A 110-amino-acid chain; its full sequence is Cuticle protein 13 (110 aa).

The sequence is that of Cuticle protein 13 from Limulus polyphemus (Atlantic horseshoe crab).